The primary structure comprises 134 residues: MSWQAYVDDHLMCDIEGHEGHRLTAAAIVGHDGSVWAQSATFPQFKPEEMNGIMTDFNEPGHLAPTGLHLGGTKYMVIQGEAGAVIRGKKGSGGITIKKTGQALVFGIYEEPVTPGQCNMVAERLGDYLLEQGL.

Residues Cys13 and Cys118 are joined by a disulfide bond. The Involved in PIP2 interaction signature appears at 84–100; it reads AVIRGKKGSGGITIKKT. At Thr114 the chain carries Phosphothreonine.

This sequence belongs to the profilin family. As to quaternary structure, occurs in many kinds of cells as a complex with monomeric actin in a 1:1 ratio. Post-translationally, phosphorylated by MAP kinases.

It localises to the cytoplasm. It is found in the cytoskeleton. Binds to actin and affects the structure of the cytoskeleton. At high concentrations, profilin prevents the polymerization of actin, whereas it enhances it at low concentrations. By binding to PIP2, it inhibits the formation of IP3 and DG. This Olea europaea (Common olive) protein is Profilin-3 (PRO3).